We begin with the raw amino-acid sequence, 1393 residues long: Protein strawberry notch homolog 1 (1393 aa).

The interval 129–148 is disordered; the sequence is STRPSVSAPTVRNAMTSAPS. Phosphoserine is present on S148. Position 149 is an N6-acetyllysine (K149). Residues S162 and S214 each carry the phosphoserine modification. K413 is modified (N6-acetyllysine). Residues 687 to 840 form a disordered region; sequence APSNNSSPRD…ANSNTNSNSS (154 aa). Phosphoserine is present on residues S692, S693, and S697. Residues 697–716 are compositionally biased toward basic and acidic residues; it reads SPCKENKIKKRKGEEITREA. Over residues 733-747 the composition is skewed to acidic residues; sequence SGSESDASDNEESDY. Phosphoserine is present on residues S754, S755, and S768. Positions 756 to 775 are enriched in acidic residues; sequence GDDDDFNPFLDESNEDDEND. A compositionally biased stretch (basic residues) spans 781–793; it reads KDHKKNKEKKKKK. Residues S794 and S815 each carry the phosphoserine modification. Over residues 824-840 the composition is skewed to low complexity; the sequence is PAPNSTPANSNTNSNSS. Positions 843–870 form a coiled coil; the sequence is TSQDAVERAQQMKKDLLDKLEKLAEDLP. An N6-acetyllysine modification is found at K1222. S1386 carries the post-translational modification Phosphoserine.

This sequence belongs to the SBNO family.

The protein resides in the nucleus. In terms of biological role, plays a crucial role in the regulation of neural stem cells (NSCs) proliferation. Enhances the phosphorylation of GSK3B through the PI3K-Akt signaling pathway, thereby upregulating the Wnt/beta-catenin signaling pathway and promoting the proliferation of NSCs. Improves ischemic stroke recovery while inhibiting neuroinflammation through small extracellular vesicles (sEVs)-mediated mechanism. Enhances the secretion of sEVs from NSCs, which in turn inhibit both the MAPK and NF-kappaB pathways in microglia. This inhibition suppresses the pro-inflammatory M1 polarization of microglia, promoting a shift towards the M2 anti-inflammatory phenotype, which is beneficial for reducing neuroinflammation. The protein is Protein strawberry notch homolog 1 (SBNO1) of Homo sapiens (Human).